A 544-amino-acid polypeptide reads, in one-letter code: Sphingosine-1-phosphate lyase (544 aa).

The Lumenal portion of the chain corresponds to 1 to 29 (MDSFSYSSMKSMLIQARGSLNSRLSEFEP). A helical; Signal-anchor for type III membrane protein membrane pass occupies residues 30-50 (LVLLLVPLVSLFLAQIIGSVF). Topologically, residues 51–544 (GVVHEKGLKA…LLVSFMDSQY (494 aa)) are cytoplasmic. The residue at position 349 (Lys-349) is an N6-(pyridoxal phosphate)lysine.

It belongs to the group II decarboxylase family. Sphingosine-1-phosphate lyase subfamily. Requires pyridoxal 5'-phosphate as cofactor. In terms of tissue distribution, expressed in the peripheral parts of leaves and the bases of trichomes.

The protein resides in the endoplasmic reticulum membrane. The catalysed reaction is sphinganine 1-phosphate = hexadecanal + phosphoethanolamine. Its pathway is lipid metabolism; sphingolipid metabolism. Cleaves phosphorylated sphingoid bases (PSBs), such as sphingosine-1-phosphate, into fatty aldehydes and phosphoethanolamine. May play a minor role in maintenance of sphingolipid metabolism during normal plant development and growth, but be required for maintaining sphingoid long chain bases (LCB) and their phosphorylated derivatives (LCB-P) levels when sphingolipid metabolism is perturbed. May play a role in dehydration stress. This is Sphingosine-1-phosphate lyase (DPL1) from Arabidopsis thaliana (Mouse-ear cress).